An 89-amino-acid chain; its full sequence is Putative regulatory protein Nther_1328 (89 aa).

Belongs to the RemA family.

The sequence is that of Putative regulatory protein Nther_1328 from Natranaerobius thermophilus (strain ATCC BAA-1301 / DSM 18059 / JW/NM-WN-LF).